The following is an 846-amino-acid chain: Rho GTPase-activating protein 12 (846 aa).

One can recognise an SH3 domain in the interval 12–74; sequence PGQVYIEVEY…PAQYVKEVTR (63 aa). Residues 152–175 show a composition bias toward polar residues; the sequence is LTHNNGKFNNDSHSPKVSSQNRTR. The interval 152–241 is disordered; sequence LTHNNGKFNN…PPNQGRPDSP (90 aa). Serine 165 and serine 176 each carry phosphoserine. Residues 191 to 200 show a composition bias toward polar residues; sequence TSFSQEQSCD. Phosphoserine occurs at positions 201, 213, and 215. Positions 224-234 are enriched in polar residues; it reads TEQIRATTPPN. 2 positions are modified to phosphothreonine: threonine 230 and threonine 231. Serine 240 is subject to Phosphoserine. The residue at position 243 (tyrosine 243) is a Phosphotyrosine. WW domains follow at residues 265–298 and 358–391; these read IQIN…PPRW and DYTN…LPKY. Positions 293-316 are disordered; sequence WKPPRWTRDASISKGDFQNPGDQE. Disordered stretches follow at residues 428–466 and 580–629; these read DTND…DQEK and ETDE…TKKN. The segment covering 445 to 461 has biased composition (polar residues); sequence NESSPSSPKHQDTASSP. A PH domain is found at 463-575; sequence DQEKYGLLNV…WFKVLSSTIN (113 aa). Acidic residues predominate over residues 580–590; that stretch reads ETDEGIEEEIP. Phosphoserine is present on serine 592. A compositionally biased stretch (basic and acidic residues) spans 594–609; the sequence is GIEKHDKEKEQKDPKK. The Rho-GAP domain occupies 656–844; sequence SNLANLCQRE…LILLELSSIF (189 aa).

Its function is as follows. GTPase activator for the Rho-type GTPases by converting them to an inactive GDP-bound state. The chain is Rho GTPase-activating protein 12 (ARHGAP12) from Homo sapiens (Human).